The chain runs to 764 residues: MGSNLSPQLCLMPFILGLLSGGVTTTPLSLARSQGSCSLEGIEIKGGSFRLLQDGQALEYVCPSGFYPYPVQTRTCRSTGSWSTLQTQDQKTVKKAECRAIHCPRPHDFENGEYWPRSPYYNVSDEISFHCYDGYTLRGSANRTCQVNGRWSGQTAICDNGAGYCSNPGIPIGTRKVGSQYRLEDSVTYHCSRGLTLRGSQRRTCQEGGSWSGTEPSCQDSFMYDTPQEVAEAFLSSLTETIEGVDAEDGHGPGEQQKRKIVLDPSGSMNIYLVLDGSDSIGAGNFTGAKKCLVNLIEKVASYGVKPRYGLVTYATYPKIWVKVSEPDSSNADWVTKQLNEINYEDHKLKSGTNTKKALQAVYSMMSWPDDIPPEGWNRTRHVIILMTDGLHNMGGDPITVIDEIRDLLYIGKDRKNPREDYLDVYVFGVGPLVNQVNINALASKKDNEQHVFKVKDMENLEDVFFQMIDESQSLSLCGMVWEHRKGTDYHKQPWQAKISVTRPSKGHESCMGAVVSEYFVLTAAHCFTVDDKEHSIKVSVGGKKQDLEIEEVLFHPNYNINGKKEAGIPEFYDYDVALIKLKNKLNYRQTIRPICLPCTEGTTRALRLPPTTTCQQQKEELLPAQDIKALFVSEEEKKLTRKEVYIKNGDKKGSCERDAQYAPGYDKVKDISEVVTPRFLCTGGVSPYADPNTCRGDSGGPLIVHKRSRFIQVGVISWGVVDVCKNQKRQKQVPAHARDFHINLFQVLPWLKQKLQDEDLGFL.

The signal sequence occupies residues 1–25 (MGSNLSPQLCLMPFILGLLSGGVTT). Sushi domains lie at 35–100 (GSCS…ECRA), 101–160 (IHCP…ICDN), and 163–220 (GYCS…SCQD). Intrachain disulfides connect Cys37-Cys76, Cys62-Cys98, Cys103-Cys145, Cys131-Cys158, Cys165-Cys205, and Cys191-Cys218. N-linked (GlcNAc...) asparagine glycans are attached at residues Asn122 and Asn142. In terms of domain architecture, VWFA spans 270 to 469 (NIYLVLDGSD…NLEDVFFQMI (200 aa)). Residues Ser278 and Ser280 each contribute to the Mg(2+) site. A glycan (N-linked (GlcNAc...) asparagine) is linked at Asn285. Residue Thr353 participates in Mg(2+) binding. Residue Asn378 is glycosylated (N-linked (GlcNAc...) asparagine). Positions 477-757 (LCGMVWEHRK…VLPWLKQKLQ (281 aa)) constitute a Peptidase S1 domain. 5 disulfide bridges follow: Cys478-Cys596, Cys511-Cys527, Cys599-Cys615, Cys656-Cys682, and Cys695-Cys725. Active-site charge relay system residues include His526 and Asp576. Ser699 functions as the Charge relay system in the catalytic mechanism.

It belongs to the peptidase S1 family. As to quaternary structure, monomer. Interacts with complement C3b; this interaction is dependent on the presence of Mg(2+). In terms of assembly, catalytic component of the C3 convertase of the alternative complement pathway, also named C3bBb, composed of complement factor B Bb and complement C3b. Catalytic component of the C5 convertase of the alternative complement pathway, also named C3bBb3b, composed of complement factor B Bb and additional molecules of complement C3b. Interacts to CFP; this interaction contributes to the stabilization of the active C3-convertase enzyme complex. It depends on Mg(2+) as a cofactor. Mn(2+) serves as cofactor. Post-translationally, cleaved by CFD following activation of the alternative complement system, generating Ba and Bb chains. Cleavage and activation takes place when CFB is already associated with complement C3b.

It is found in the secreted. It localises to the cell surface. The catalysed reaction is Cleavage of Arg-|-Ser bond in complement component C3 alpha-chain to yield C3a and C3b, and Arg-|-Xaa bond in complement component C5 alpha-chain to yield C5a and C5b.. In terms of biological role, precursor of the catalytic component of the C3 and C5 convertase complexes of the alternative pathway of the complement system, a cascade of proteins that leads to phagocytosis and breakdown of pathogens and signaling that strengthens the adaptive immune system. The alternative complement pathway acts as an amplification loop that enhances other complement pathways (classical, lectin and GZMK) by promoting formation of additional C3 and C5 convertases. CFB is cleaved and activated by CFD to generate Ba and Bb chains; Bb chain constituting the catalytic component of the C3 and C5 convertases. Functionally, serine protease component of the complement C3 and C5 convertase complexes of the alternative complement pathway. Following cleavage and activation by factor D (CFD), forms the C3 convertase together with complement C3b. As part of the C3 convertase, cleaves and activates C3 into C3a anaphylatoxin and C3b opsonin, the next components of the complement pathways. When an additional complement C3b molecule binds to the C3 convertase, forms the C5 convertase, which cleaves and activates C5 into C5a anaphylatoxin and C5b component of the membrane attack complex. Involved in proliferation and differentiation of preactivated B-lymphocytes, rapid spreading of peripheral blood monocytes, stimulation of lymphocyte blastogenesis and lysis of erythrocytes. This is Complement factor B (CFB) from Pongo pygmaeus (Bornean orangutan).